The following is a 457-amino-acid chain: Cysteine--tRNA ligase (457 aa).

Cys28 provides a ligand contact to Zn(2+). A 'HIGH' region motif is present at residues 30–40; it reads PTVYDTAHIGN. Zn(2+)-binding residues include Cys212, His237, and Glu241. The 'KMSKS' region motif lies at 270–274; it reads KMSKS. Position 273 (Lys273) interacts with ATP.

This sequence belongs to the class-I aminoacyl-tRNA synthetase family. Monomer. The cofactor is Zn(2+).

It localises to the cytoplasm. It carries out the reaction tRNA(Cys) + L-cysteine + ATP = L-cysteinyl-tRNA(Cys) + AMP + diphosphate. The polypeptide is Cysteine--tRNA ligase (Wolbachia pipientis wMel).